The following is a 331-amino-acid chain: Lipoate-protein ligase LplJ (331 aa).

Residues 27–214 enclose the BPL/LPL catalytic domain; the sequence is DPEQQYLLFY…HIFNTNDVGN (188 aa). ATP contacts are provided by residues Arg-69, 74–77, and Lys-131; that span reads GAVY. A (R)-lipoate-binding site is contributed by Lys-131.

It belongs to the LplA family.

The protein resides in the cytoplasm. The catalysed reaction is L-lysyl-[lipoyl-carrier protein] + (R)-lipoate + ATP = N(6)-[(R)-lipoyl]-L-lysyl-[lipoyl-carrier protein] + AMP + diphosphate + H(+). Its pathway is protein modification; protein lipoylation via exogenous pathway; protein N(6)-(lipoyl)lysine from lipoate: step 1/2. It functions in the pathway protein modification; protein lipoylation via exogenous pathway; protein N(6)-(lipoyl)lysine from lipoate: step 2/2. Functionally, catalyzes both the ATP-dependent activation of exogenously supplied lipoate to lipoyl-AMP and the transfer of the activated lipoyl onto the lipoyl domains of lipoate-dependent enzymes. Is also able to use octanoate as substrate. The chain is Lipoate-protein ligase LplJ (lplJ) from Bacillus subtilis (strain 168).